The following is a 489-amino-acid chain: Protein nucleotidyltransferase YdiU (489 aa).

G88, G90, R91, K111, D123, G124, R174, and R181 together coordinate ATP. The Proton acceptor role is filled by D250. Mg(2+) contacts are provided by N251 and D260. Residue D260 coordinates ATP.

The protein belongs to the SELO family. Mg(2+) serves as cofactor. It depends on Mn(2+) as a cofactor.

The catalysed reaction is L-seryl-[protein] + ATP = 3-O-(5'-adenylyl)-L-seryl-[protein] + diphosphate. The enzyme catalyses L-threonyl-[protein] + ATP = 3-O-(5'-adenylyl)-L-threonyl-[protein] + diphosphate. It carries out the reaction L-tyrosyl-[protein] + ATP = O-(5'-adenylyl)-L-tyrosyl-[protein] + diphosphate. It catalyses the reaction L-histidyl-[protein] + UTP = N(tele)-(5'-uridylyl)-L-histidyl-[protein] + diphosphate. The catalysed reaction is L-seryl-[protein] + UTP = O-(5'-uridylyl)-L-seryl-[protein] + diphosphate. The enzyme catalyses L-tyrosyl-[protein] + UTP = O-(5'-uridylyl)-L-tyrosyl-[protein] + diphosphate. Nucleotidyltransferase involved in the post-translational modification of proteins. It can catalyze the addition of adenosine monophosphate (AMP) or uridine monophosphate (UMP) to a protein, resulting in modifications known as AMPylation and UMPylation. This chain is Protein nucleotidyltransferase YdiU, found in Vibrio cholerae serotype O1 (strain ATCC 39315 / El Tor Inaba N16961).